Here is a 383-residue protein sequence, read N- to C-terminus: Small ribosomal subunit protein mS31 (383 aa).

A mitochondrion-targeting transit peptide spans 1–21 (MLRSLCSIAVRLGGARQPRLL). The stretch at 158–187 (VNEAQIKLQEQRKALLNDVREKVEQEEVEE) forms a coiled coil.

It belongs to the mitochondrion-specific ribosomal protein mS31 family. As to quaternary structure, component of the mitochondrial ribosome small subunit (28S) which comprises a 12S rRNA and about 30 distinct proteins.

It is found in the mitochondrion. This chain is Small ribosomal subunit protein mS31 (mrps-31), found in Caenorhabditis elegans.